Consider the following 153-residue polypeptide: Mitotic-spindle organizing protein 2 (153 aa).

Residues 80-153 are disordered; that stretch reads KVSETSTGDA…SSSSSQLTSN (74 aa). Composition is skewed to polar residues over residues 81-99 and 107-133; these read VSET…TAVP and KMSS…SATR. The span at 134–153 shows a compositional bias: low complexity; it reads GQKSTKSSGSSSSSSQLTSN.

The protein belongs to the MOZART2 family. As to quaternary structure, part of the gamma-tubulin complex. Interacts with TUBG1.

Its subcellular location is the cytoplasm. The protein localises to the cytoskeleton. It localises to the microtubule organizing center. The protein resides in the centrosome. It is found in the spindle. The chain is Mitotic-spindle organizing protein 2 (mzt2) from Danio rerio (Zebrafish).